The chain runs to 156 residues: Ecotin (156 aa).

The N-terminal stretch at 1 to 19 (MKALLIAAGVAALSSTAMA) is a signal peptide. Cys-65 and Cys-102 are joined by a disulfide.

This sequence belongs to the protease inhibitor I11 (ecotin) family. As to quaternary structure, homodimer.

Its subcellular location is the periplasm. Functionally, general inhibitor of family S1 serine proteases. The sequence is that of Ecotin from Pseudomonas aeruginosa (strain UCBPP-PA14).